The sequence spans 47 residues: Photosystem II reaction center protein K (47 aa).

Residues 1-10 constitute a propeptide that is removed on maturation; that stretch reads MAAFSLDLLA. A helical membrane pass occupies residues 19–39; the sequence is FGPLIDILPIIPVFFLLLAFV.

Belongs to the PsbK family. As to quaternary structure, PSII is composed of 1 copy each of membrane proteins PsbA, PsbB, PsbC, PsbD, PsbE, PsbF, PsbH, PsbI, PsbJ, PsbK, PsbL, PsbM, PsbT, PsbX, PsbY, PsbZ, Psb30/Ycf12, peripheral proteins PsbO, CyanoQ (PsbQ), PsbU, PsbV and a large number of cofactors. It forms dimeric complexes.

Its subcellular location is the cellular thylakoid membrane. Its function is as follows. One of the components of the core complex of photosystem II (PSII). PSII is a light-driven water:plastoquinone oxidoreductase that uses light energy to abstract electrons from H(2)O, generating O(2) and a proton gradient subsequently used for ATP formation. It consists of a core antenna complex that captures photons, and an electron transfer chain that converts photonic excitation into a charge separation. The protein is Photosystem II reaction center protein K of Synechococcus sp. (strain WH7803).